We begin with the raw amino-acid sequence, 383 residues long: Succinyl-diaminopimelate desuccinylase (383 aa).

His-72 lines the Zn(2+) pocket. Asp-74 is an active-site residue. Asp-105 contributes to the Zn(2+) binding site. Glu-137 (proton acceptor) is an active-site residue. 3 residues coordinate Zn(2+): Glu-138, Glu-167, and His-352.

The protein belongs to the peptidase M20A family. DapE subfamily. In terms of assembly, homodimer. Requires Zn(2+) as cofactor. Co(2+) is required as a cofactor.

The catalysed reaction is N-succinyl-(2S,6S)-2,6-diaminopimelate + H2O = (2S,6S)-2,6-diaminopimelate + succinate. It functions in the pathway amino-acid biosynthesis; L-lysine biosynthesis via DAP pathway; LL-2,6-diaminopimelate from (S)-tetrahydrodipicolinate (succinylase route): step 3/3. Functionally, catalyzes the hydrolysis of N-succinyl-L,L-diaminopimelic acid (SDAP), forming succinate and LL-2,6-diaminopimelate (DAP), an intermediate involved in the bacterial biosynthesis of lysine and meso-diaminopimelic acid, an essential component of bacterial cell walls. In Ehrlichia ruminantium (strain Gardel), this protein is Succinyl-diaminopimelate desuccinylase.